A 166-amino-acid polypeptide reads, in one-letter code: Ribonuclease H2 subunit C (166 aa).

The residue at position 1 (methionine 1) is an N-acetylmethionine.

Belongs to the RNase H2 subunit C family. As to quaternary structure, the RNase H2 complex is a heterotrimer composed of the catalytic subunit RNASEH2A and the non-catalytic subunits RNASEH2B and RNASEH2C.

It is found in the nucleus. Functionally, non catalytic subunit of RNase H2, an endonuclease that specifically degrades the RNA of RNA:DNA hybrids. Participates in DNA replication, possibly by mediating the removal of lagging-strand Okazaki fragment RNA primers during DNA replication. Mediates the excision of single ribonucleotides from DNA:RNA duplexes. The polypeptide is Ribonuclease H2 subunit C (Rnaseh2c) (Mus musculus (Mouse)).